The chain runs to 196 residues: Corrinoid adenosyltransferase (196 aa).

36 to 42 (GNGKGKT) contributes to the ATP binding site.

It belongs to the Cob(I)alamin adenosyltransferase family.

It localises to the cytoplasm. It carries out the reaction 2 cob(II)yrinate a,c diamide + reduced [electron-transfer flavoprotein] + 2 ATP = 2 adenosylcob(III)yrinate a,c-diamide + 2 triphosphate + oxidized [electron-transfer flavoprotein] + 3 H(+). The enzyme catalyses 2 cob(II)alamin + reduced [electron-transfer flavoprotein] + 2 ATP = 2 adenosylcob(III)alamin + 2 triphosphate + oxidized [electron-transfer flavoprotein] + 3 H(+). It functions in the pathway cofactor biosynthesis; adenosylcobalamin biosynthesis; adenosylcobalamin from cob(II)yrinate a,c-diamide: step 2/7. Functionally, required for both de novo synthesis of the corrin ring for the assimilation of exogenous corrinoids. Participates in the adenosylation of a variety of incomplete and complete corrinoids. This chain is Corrinoid adenosyltransferase (btuR), found in Escherichia coli O6:H1 (strain CFT073 / ATCC 700928 / UPEC).